Here is a 151-residue protein sequence, read N- to C-terminus: Sperm surface protein Sp17 (151 aa).

Disordered stretches follow at residues 56-115 (DPAE…EKEE) and 127-151 (GHIA…EENK). A compositionally biased stretch (basic and acidic residues) spans 62-98 (SKVEDRFYNNHAFEEQEPPEKSDPKQEESQISGKEEE). In terms of domain architecture, IQ spans 114-143 (EEVAAVKIQAAFRGHIAREEAKKMKTNSLQ).

As to quaternary structure, homodimer. May interact with ROPN1. Testis and sperm specific.

The protein resides in the membrane. Its function is as follows. Sperm surface zona pellucida binding protein. Helps to bind spermatozoa to the zona pellucida with high affinity. Might function in binding zona pellucida and carbohydrates. In Homo sapiens (Human), this protein is Sperm surface protein Sp17 (SPA17).